Consider the following 1125-residue polypeptide: Probable phospholipid-transporting ATPase IIB (1125 aa).

At 1–131 the chain is on the cytoplasmic side; sequence MADGIPLNPV…IKNQKYNIVT (131 aa). A helical transmembrane segment spans residues 132–152; sequence FVPGVLYQQFKFFLNLYFLVV. Residues 153–161 are Extracellular-facing; sequence ACSQFVPSL. A helical transmembrane segment spans residues 162–182; the sequence is KIGYLYTYWAPLGFVLAVTMV. Topologically, residues 183 to 369 are cytoplasmic; the sequence is REAVDEVRRC…LDLELNRLTK (187 aa). Residues 370 to 390 form a helical membrane-spanning segment; that stretch reads ALFLAQVVLSVVMVALQGFLG. The Extracellular segment spans residues 391-395; that stretch reads PWFRN. A helical transmembrane segment spans residues 396–415; sequence LFRFVVLFSYIIPISLRVNL. The Cytoplasmic portion of the chain corresponds to 416-928; it reads DMGKSAYGWM…ALGQFVMHRG (513 aa). The active-site 4-aspartylphosphate intermediate is the Asp455. Residues Asp455, Lys456, and Thr457 each contribute to the ATP site. Residue Asp455 participates in Mg(2+) binding. A Mg(2+)-binding site is contributed by Thr457. A compositionally biased stretch (low complexity) spans 500 to 511; sequence QSNGSSASSTPS. Disordered regions lie at residues 500–525 and 552–574; these read QSNG…RKSV and GANA…RTYQ. A compositionally biased stretch (acidic residues) spans 558-567; it reads ESTEADQDFS. The ATP site is built by Glu580, Phe622, Lys627, Lys646, Arg675, Thr676, Thr755, Gly756, Asp757, Arg837, and Lys843. A Mg(2+)-binding site is contributed by Asp863. Positions 866 and 867 each coordinate ATP. Residue Asp867 coordinates Mg(2+). A helical membrane pass occupies residues 929–949; it reads MIISTMQAVFSSIFYFASVPL. Residues 950–951 lie on the Extracellular side of the membrane; sequence YQ. A helical transmembrane segment spans residues 952-972; that stretch reads GFLMVGYATIYTMFPVFSLVL. The Cytoplasmic segment spans residues 973–1001; that stretch reads DQDVKPEMALLYPELYKDLTKGRSLSFKT. Residues 1002–1022 form a helical membrane-spanning segment; that stretch reads FLIWVLISIYQGGILMYGALV. Residues 1023–1030 lie on the Extracellular side of the membrane; it reads LFDQEFVH. A helical membrane pass occupies residues 1031–1051; it reads VVAISFTALILTELLMVALTI. Over 1052-1055 the chain is Cytoplasmic; that stretch reads RTWH. Residues 1056–1076 form a helical membrane-spanning segment; that stretch reads WLMVVAQLISLACYLASLAFL. The Extracellular portion of the chain corresponds to 1077–1088; sequence NEYFDLSFITTR. The chain crosses the membrane as a helical span at residues 1089–1109; the sequence is VFLWKVCVITLVSCLPLYIIK. Residues 1110-1125 are Cytoplasmic-facing; the sequence is YLKRKFSPPSYSKLSS.

This sequence belongs to the cation transport ATPase (P-type) (TC 3.A.3) family. Type IV subfamily. Requires Mg(2+) as cofactor.

It localises to the golgi apparatus. Its subcellular location is the trans-Golgi network membrane. The catalysed reaction is ATP + H2O + phospholipidSide 1 = ADP + phosphate + phospholipidSide 2.. This chain is Probable phospholipid-transporting ATPase IIB (atp9b), found in Danio rerio (Zebrafish).